We begin with the raw amino-acid sequence, 131 residues long: NADPH-dependent 7-cyano-7-deazaguanine reductase (131 aa).

Cys-47 (thioimide intermediate) is an active-site residue. Asp-54 functions as the Proton donor in the catalytic mechanism. Residues 69–71 (MEL) and 88–89 (HE) each bind substrate.

Belongs to the GTP cyclohydrolase I family. QueF type 1 subfamily.

The protein resides in the cytoplasm. It carries out the reaction 7-aminomethyl-7-carbaguanine + 2 NADP(+) = 7-cyano-7-deazaguanine + 2 NADPH + 3 H(+). It participates in tRNA modification; tRNA-queuosine biosynthesis. Its function is as follows. Catalyzes the NADPH-dependent reduction of 7-cyano-7-deazaguanine (preQ0) to 7-aminomethyl-7-deazaguanine (preQ1). This Microcystis aeruginosa (strain NIES-843 / IAM M-2473) protein is NADPH-dependent 7-cyano-7-deazaguanine reductase.